The primary structure comprises 308 residues: Ribosomal RNA large subunit methyltransferase F (308 aa).

This sequence belongs to the methyltransferase superfamily. METTL16/RlmF family.

Its subcellular location is the cytoplasm. The enzyme catalyses adenosine(1618) in 23S rRNA + S-adenosyl-L-methionine = N(6)-methyladenosine(1618) in 23S rRNA + S-adenosyl-L-homocysteine + H(+). Functionally, specifically methylates the adenine in position 1618 of 23S rRNA. This is Ribosomal RNA large subunit methyltransferase F from Shigella boydii serotype 18 (strain CDC 3083-94 / BS512).